A 490-amino-acid chain; its full sequence is AP-5 complex subunit mu-1 (490 aa).

Residues 206–476 form the MHD domain; sequence KPQVSISITE…LISSDYYIWN (271 aa).

It belongs to the adaptor complexes medium subunit family. Probably part of the adaptor protein complex 5 (AP-5) a tetramer composed of AP5B1, AP5M1, AP5S1 and AP5Z1.

Its subcellular location is the cytoplasm. It localises to the cytosol. The protein resides in the late endosome membrane. It is found in the lysosome membrane. Its function is as follows. As part of AP-5, a probable fifth adaptor protein complex it may be involved in endosomal transport. The chain is AP-5 complex subunit mu-1 (AP5M1) from Macaca fascicularis (Crab-eating macaque).